The following is an 828-amino-acid chain: Glycerol-3-phosphate acyltransferase (828 aa).

The HXXXXD motif signature appears at 310–315 (HRSHID).

This sequence belongs to the GPAT/DAPAT family.

It localises to the cell inner membrane. It carries out the reaction sn-glycerol 3-phosphate + an acyl-CoA = a 1-acyl-sn-glycero-3-phosphate + CoA. It participates in phospholipid metabolism; CDP-diacylglycerol biosynthesis; CDP-diacylglycerol from sn-glycerol 3-phosphate: step 1/3. In Pseudomonas putida (strain ATCC 47054 / DSM 6125 / CFBP 8728 / NCIMB 11950 / KT2440), this protein is Glycerol-3-phosphate acyltransferase.